We begin with the raw amino-acid sequence, 77 residues long: Small ribosomal subunit protein uS17 (77 aa).

This sequence belongs to the universal ribosomal protein uS17 family. Part of the 30S ribosomal subunit.

Functionally, one of the primary rRNA binding proteins, it binds specifically to the 5'-end of 16S ribosomal RNA. The protein is Small ribosomal subunit protein uS17 of Rickettsia canadensis (strain McKiel).